Reading from the N-terminus, the 206-residue chain is Ras-related protein RABG3e (206 aa).

G15–T22 contacts GTP. The short motif at Y37 to F45 is the Effector region element. Residues D63 to Q67, N125 to D128, and S158 to A159 each bind GTP. S-geranylgeranyl cysteine attachment occurs at residues C204 and C206. Position 206 is a cysteine methyl ester (C206).

This sequence belongs to the small GTPase superfamily. Rab family.

It localises to the cell membrane. In terms of biological role, intracellular vesicle trafficking and protein transport. May play a role in adaptation to stress by recylcing macromolecules in specific cellular compartments. This Arabidopsis thaliana (Mouse-ear cress) protein is Ras-related protein RABG3e (RABG3E).